We begin with the raw amino-acid sequence, 95 residues long: Cell division topological specificity factor (95 aa).

This sequence belongs to the MinE family.

In terms of biological role, prevents the cell division inhibition by proteins MinC and MinD at internal division sites while permitting inhibition at polar sites. This ensures cell division at the proper site by restricting the formation of a division septum at the midpoint of the long axis of the cell. This Synechococcus sp. (strain CC9902) protein is Cell division topological specificity factor.